We begin with the raw amino-acid sequence, 247 residues long: E3 ubiquitin-protein ligase RNF182 (247 aa).

The segment at 20–68 (CKICYNRYNLKQRKPKVLECCHRVCAKCLYKIIDFGDSPQGVIVCPFCR) adopts an RING-type zinc-finger fold. A run of 2 helical transmembrane segments spans residues 184 to 204 (VLVWLLGLLYFSSLPLGIYLL) and 211 to 231 (LGVVFVSLVPSSLVILMVYGF).

As to quaternary structure, interacts with ATP6V0C.

Its subcellular location is the membrane. The protein resides in the cytoplasm. The enzyme catalyses S-ubiquitinyl-[E2 ubiquitin-conjugating enzyme]-L-cysteine + [acceptor protein]-L-lysine = [E2 ubiquitin-conjugating enzyme]-L-cysteine + N(6)-ubiquitinyl-[acceptor protein]-L-lysine.. It functions in the pathway protein modification; protein ubiquitination. Its function is as follows. E3 ubiquitin-protein ligase that mediates the ubiquitination of ATP6V0C and targets it to degradation via the ubiquitin-proteasome pathway. Also plays a role in the inhibition of TLR-triggered innate immune response by mediating 'Lys'-48-linked ubiquitination and subsequent degradation of NF-kappa-B component RELA. The sequence is that of E3 ubiquitin-protein ligase RNF182 (Rnf182) from Rattus norvegicus (Rat).